A 337-amino-acid chain; its full sequence is uncharacterized protein (337 aa).

Residues 1 to 10 (MKLKINIRPN) lie on the Cytoplasmic side of the membrane. A helical membrane pass occupies residues 11–31 (EIIFLICIVVIFSFSYTLTYF). Over 32 to 100 (DSPIFKEHYI…LEKLFSFSDN (69 aa)) the chain is Extracellular. The helical transmembrane segment at 101–121 (ILIVLIIVQVIVGFLIFLLSV) threads the bilayer. The Cytoplasmic portion of the chain corresponds to 122-197 (EKLSKCNYQL…KILIIKKKRD (76 aa)). Positions 148-167 (NNNNEDINNNNNNNNNNNNK) are enriched in low complexity. Residues 148–179 (NNNNEDINNNNNNNNNNNNKNKNDERNNEEIE) form a disordered region. The helical transmembrane segment at 198–218 (ILLAIIIFFLVLLGVLTIIYV) threads the bilayer. The Extracellular segment spans residues 219-285 (SFIPLNIRKA…SWSLDSGLFN (67 aa)). A helical transmembrane segment spans residues 286-306 (VKIVFFSTILIEFLTGCLILL). Topologically, residues 307-337 (MKFKKDPNIVPLTKPSIASPTQIPHLFCIAK) are cytoplasmic.

It is found in the membrane. This is an uncharacterized protein from Dictyostelium discoideum (Social amoeba).